The primary structure comprises 292 residues: 4-hydroxy-tetrahydrodipicolinate synthase (292 aa).

Thr-45 is a binding site for pyruvate. Tyr-133 functions as the Proton donor/acceptor in the catalytic mechanism. Lys-161 acts as the Schiff-base intermediate with substrate in catalysis. Ile-203 is a pyruvate binding site.

The protein belongs to the DapA family. Homotetramer; dimer of dimers.

The protein localises to the cytoplasm. It carries out the reaction L-aspartate 4-semialdehyde + pyruvate = (2S,4S)-4-hydroxy-2,3,4,5-tetrahydrodipicolinate + H2O + H(+). The protein operates within amino-acid biosynthesis; L-lysine biosynthesis via DAP pathway; (S)-tetrahydrodipicolinate from L-aspartate: step 3/4. Functionally, catalyzes the condensation of (S)-aspartate-beta-semialdehyde [(S)-ASA] and pyruvate to 4-hydroxy-tetrahydrodipicolinate (HTPA). In Cronobacter sakazakii (strain ATCC BAA-894) (Enterobacter sakazakii), this protein is 4-hydroxy-tetrahydrodipicolinate synthase.